A 303-amino-acid polypeptide reads, in one-letter code: Indole-3-glycerol phosphate synthase (303 aa).

It belongs to the TrpC family.

It catalyses the reaction 1-(2-carboxyphenylamino)-1-deoxy-D-ribulose 5-phosphate + H(+) = (1S,2R)-1-C-(indol-3-yl)glycerol 3-phosphate + CO2 + H2O. Its pathway is amino-acid biosynthesis; L-tryptophan biosynthesis; L-tryptophan from chorismate: step 4/5. The sequence is that of Indole-3-glycerol phosphate synthase from Acaryochloris marina (strain MBIC 11017).